Here is a 362-residue protein sequence, read N- to C-terminus: MEQQEKRGTVRKALLGSVIGFGGLALAGCDVEAPGGPLGTALGFGWPKGITPEATSMYNFWVWVWVTAWIIGFIMWGLFIYGMFSWSAKRAKKAGKDEFPRQTQYNIPLELVLTIVPIIIVMALFFFTVQTQDKVTAMDKDPKVTVDVTGYQWNWKFGYAKVAGELSPTGSDYVGTDEKRQEAAEKTKFDQGGDNPNPINGRSKTDTSYLHFNKIETLGTSEEIPVLVLPSNTPVEFDLASADVSHAFWVPEFLFKRDAYNHPEQNKQQRRFQIEKIEKEGAFVGRCAEMCGTYHAMMNFEIRVVSPEKFAQYLKFRNDNPQATNSDALKSIGEAPYATSTHPFNSERATRDGANFDDTAAA.

A signal peptide spans 1 to 28 (MEQQEKRGTVRKALLGSVIGFGGLALAG). Residue Cys-29 is the site of N-palmitoyl cysteine attachment. Residue Cys-29 is the site of S-diacylglycerol cysteine attachment. The next 2 membrane-spanning stretches (helical) occupy residues 60–80 (FWVW…GLFI) and 107–127 (IPLE…LFFF). The interval 171–206 (SDYVGTDEKRQEAAEKTKFDQGGDNPNPINGRSKTD) is disordered. The span at 176–191 (TDEKRQEAAEKTKFDQ) shows a compositional bias: basic and acidic residues. Residues 197–206 (NPINGRSKTD) show a composition bias toward polar residues. Cu cation-binding residues include His-246, Cys-287, Glu-289, Cys-291, His-295, and Met-298. Residues 325–362 (NSDALKSIGEAPYATSTHPFNSERATRDGANFDDTAAA) form a disordered region.

Belongs to the cytochrome c oxidase subunit 2 family. As to quaternary structure, associates with subunits I, III and IV to form cytochrome c oxidase. Requires binuclear copper center (CuA) as cofactor.

It localises to the cell membrane. The catalysed reaction is 4 Fe(II)-[cytochrome c] + O2 + 8 H(+)(in) = 4 Fe(III)-[cytochrome c] + 2 H2O + 4 H(+)(out). In terms of biological role, subunits I and II form the functional core of the enzyme complex. Electrons originating in cytochrome c are transferred via heme a and Cu(A) to the binuclear center formed by heme a3 and Cu(B). The protein is Cytochrome c oxidase subunit 2 (ctaC) of Corynebacterium diphtheriae (strain ATCC 700971 / NCTC 13129 / Biotype gravis).